Here is a 169-residue protein sequence, read N- to C-terminus: Ribosome maturation factor RimM (169 aa).

The PRC barrel domain maps to 94–168 (DDEFYHADLI…RIVADPPEGL (75 aa)).

Belongs to the RimM family. Binds ribosomal protein uS19.

The protein resides in the cytoplasm. An accessory protein needed during the final step in the assembly of 30S ribosomal subunit, possibly for assembly of the head region. Essential for efficient processing of 16S rRNA. May be needed both before and after RbfA during the maturation of 16S rRNA. It has affinity for free ribosomal 30S subunits but not for 70S ribosomes. The sequence is that of Ribosome maturation factor RimM from Cereibacter sphaeroides (strain ATCC 17023 / DSM 158 / JCM 6121 / CCUG 31486 / LMG 2827 / NBRC 12203 / NCIMB 8253 / ATH 2.4.1.) (Rhodobacter sphaeroides).